A 382-amino-acid polypeptide reads, in one-letter code: MALQGISVVELSGLAPGPFCAMVLADFGARVVRVDRPGSRYDVSRLGRGKRSLVLDLKQPRGAAVLRRLCKRSDVLLEPFRRGVMEKLQLGPEILQRENPRLIYARLSGFGQSGSFCRLAGHDINYLALSGVLSKIGRSGENPYAPLNLLADFAGGGLMCALGIIMALFDRTRTGKGQVIDANMVEGTAYLSSFLWKTQKLSLWEAPRGQNMLDGGAPFYTTYRTADGEFMAVGAIEPQFYELLIKGLGLKSDELPNQMSMDDWPEMKKKFADVFAEKTKAEWCQIFDGTDACVTPVLTFEEVVHHDHNKERGSFITSEEQDVSPRPAPLLLNTPAIPSFKRDPFIGEHTEEILEEFGFSREEIYQLNSDKIIESNKVKASL.

Substrate is bound by residues arginine 36 and 55-58; that span reads LDLK. Lysine 58 bears the N6-acetyllysine mark. Position 87 is an N6-acetyllysine; alternate (lysine 87). The residue at position 87 (lysine 87) is an N6-succinyllysine; alternate. 121–126 provides a ligand contact to substrate; the sequence is GHDINY. Histidine 122 (proton acceptor) is an active-site residue. Aspartate 152 serves as the catalytic Proton donor. Lysine 268 bears the N6-succinyllysine mark. Residues 380-382 carry the Microbody targeting signal motif; that stretch reads ASL.

Belongs to the CoA-transferase III family. Monomer.

Its subcellular location is the peroxisome. It is found in the mitochondrion. The enzyme catalyses a (2S)-2-methylacyl-CoA = a (2R)-2-methylacyl-CoA. It catalyses the reaction (25R)-3alpha,7alpha,12alpha-trihydroxy-5beta-cholestan-26-oyl-CoA = (25S)-3alpha,7alpha,12alpha-trihydroxy-5beta-cholestan-26-oyl-CoA. The catalysed reaction is (2R,6)-dimethylheptanoyl-CoA = (2S,6)-dimethylheptanoyl-CoA. The protein operates within lipid metabolism; bile acid biosynthesis. It functions in the pathway lipid metabolism; fatty acid metabolism. Functionally, catalyzes the interconversion of (R)- and (S)-stereoisomers of alpha-methyl-branched-chain fatty acyl-CoA esters. Acts only on coenzyme A thioesters, not on free fatty acids, and accepts as substrates a wide range of alpha-methylacyl-CoAs, including pristanoyl-CoA, trihydroxycoprostanoyl-CoA (an intermediate in bile acid synthesis), and arylpropionic acids like the anti-inflammatory drug ibuprofen (2-(4-isobutylphenyl)propionic acid) but neither 3-methyl-branched nor linear-chain acyl-CoAs. The chain is Alpha-methylacyl-CoA racemase (AMACR) from Homo sapiens (Human).